Reading from the N-terminus, the 365-residue chain is Carboxynorspermidine/carboxyspermidine decarboxylase (365 aa).

Lys37 bears the N6-(pyridoxal phosphate)lysine mark. 2 residues coordinate substrate: Glu233 and Asp269.

It belongs to the Orn/Lys/Arg decarboxylase class-II family. NspC subfamily. In terms of assembly, homodimer. The cofactor is pyridoxal 5'-phosphate.

Its subcellular location is the cytoplasm. The catalysed reaction is carboxynorspermidine + H(+) = norspermidine + CO2. It catalyses the reaction carboxyspermidine + H(+) = spermidine + CO2. Catalyzes the decarboxylation of carboxynorspermidine and carboxyspermidine. This chain is Carboxynorspermidine/carboxyspermidine decarboxylase, found in Herminiimonas arsenicoxydans.